Consider the following 179-residue polypeptide: Large ribosomal subunit protein uL6 (179 aa).

Belongs to the universal ribosomal protein uL6 family. Part of the 50S ribosomal subunit.

Functionally, this protein binds to the 23S rRNA, and is important in its secondary structure. It is located near the subunit interface in the base of the L7/L12 stalk, and near the tRNA binding site of the peptidyltransferase center. This is Large ribosomal subunit protein uL6 from Nocardioides sp. (strain ATCC BAA-499 / JS614).